The sequence spans 164 residues: MTRKQRRLLMIGGAGVVLVVAVGLVLNAMRGSIVFFSTPKMVSEQQIGAGTRFRLGGVVEPGSLHRGDQLAVSFKVSDGAATVPVAFKGILPDLFREGQGVIAEGALDTAGVFKADTVLAKHDETYMPKEVADALKKQGHWKDDYEKKPPGAPGASADAAGPSR.

The Cytoplasmic portion of the chain corresponds to 1 to 7 (MTRKQRR). Residues 8-28 (LLMIGGAGVVLVVAVGLVLNA) traverse the membrane as a helical; Signal-anchor for type II membrane protein segment. At 29–164 (MRGSIVFFST…ASADAAGPSR (136 aa)) the chain is on the periplasmic side. Residues H122 and Y126 each contribute to the heme site. Basic and acidic residues predominate over residues 137–149 (KQGHWKDDYEKKP). Positions 137 to 164 (KQGHWKDDYEKKPPGAPGASADAAGPSR) are disordered. Low complexity predominate over residues 153 to 164 (PGASADAAGPSR).

The protein belongs to the CcmE/CycJ family.

Its subcellular location is the cell inner membrane. Functionally, heme chaperone required for the biogenesis of c-type cytochromes. Transiently binds heme delivered by CcmC and transfers the heme to apo-cytochromes in a process facilitated by CcmF and CcmH. This Rhodopseudomonas palustris (strain BisB5) protein is Cytochrome c-type biogenesis protein CcmE.